The primary structure comprises 223 residues: Ubiquitin-conjugating enzyme E2 S (223 aa).

Methionine 1 carries the N-acetylmethionine modification. The UBC core domain maps to 11-157 (HIIRLVYKEV…ARLLTEIHGG (147 aa)). Cysteine 95 serves as the catalytic Glycyl thioester intermediate. The tract at residues 155–223 (HGGAGGPSGG…TDKKRALRRL (69 aa)) is disordered. Over residues 169 to 195 (GRATASGAAASTADPTAPGGPAGAEGP) the composition is skewed to low complexity. The residue at position 174 (serine 174) is a Phosphoserine. Over residues 209 to 223 (AAKKKTDKKRALRRL) the composition is skewed to basic residues.

This sequence belongs to the ubiquitin-conjugating enzyme family. In terms of assembly, component of the APC/C complex, composed of at least 14 distinct subunits that assemble into a complex of at least 19 chains with a combined molecular mass of around 1.2 MDa. Within this complex, directly interacts with ANAPC2 and ANAPC4. Interacts with CDC20, FZR1/CDH1 and VHL. Autoubiquitinated by the APC/C complex during G1, leading to its degradation by the proteasome.

It catalyses the reaction S-ubiquitinyl-[E1 ubiquitin-activating enzyme]-L-cysteine + [E2 ubiquitin-conjugating enzyme]-L-cysteine = [E1 ubiquitin-activating enzyme]-L-cysteine + S-ubiquitinyl-[E2 ubiquitin-conjugating enzyme]-L-cysteine.. The protein operates within protein modification; protein ubiquitination. In terms of biological role, accepts ubiquitin from the E1 complex and catalyzes its covalent attachment to other proteins. Catalyzes 'Lys-11'-linked polyubiquitination. Acts as an essential factor of the anaphase promoting complex/cyclosome (APC/C), a cell cycle-regulated ubiquitin ligase that controls progression through mitosis. Acts by specifically elongating 'Lys-11'-linked polyubiquitin chains initiated by the E2 enzyme UBE2C/UBCH10 on APC/C substrates, enhancing the degradation of APC/C substrates by the proteasome and promoting mitotic exit. Also acts by elongating ubiquitin chains initiated by the E2 enzyme UBE2D1/UBCH5 in vitro; it is however unclear whether UBE2D1/UBCH5 acts as an E2 enzyme for the APC/C in vivo. Also involved in ubiquitination and subsequent degradation of VHL, resulting in an accumulation of HIF1A. In vitro able to promote polyubiquitination using all 7 ubiquitin Lys residues, except 'Lys-48'-linked polyubiquitination. The chain is Ubiquitin-conjugating enzyme E2 S (UBE2S) from Bos taurus (Bovine).